The following is a 116-amino-acid chain: Non-specific lipid-transfer protein 1 (116 aa).

An N-terminal signal peptide occupies residues methionine 1 to alanine 25. Disulfide bonds link cysteine 28–cysteine 75, cysteine 38–cysteine 52, cysteine 53–cysteine 98, and cysteine 73–cysteine 112.

Belongs to the plant LTP family. As to expression, aleurone (external part) of the seeds.

Its function is as follows. Plant non-specific lipid-transfer proteins transfer phospholipids as well as galactolipids across membranes. May play a role in wax or cutin deposition in the cell walls of expanding epidermal cells and certain secretory tissues. This is Non-specific lipid-transfer protein 1 (LTP) from Oryza sativa subsp. indica (Rice).